A 339-amino-acid polypeptide reads, in one-letter code: NADH-quinone oxidoreductase subunit H (339 aa).

Transmembrane regions (helical) follow at residues 9-29 (IFPL…LILC), 50-70 (PNVV…KLLF), 82-102 (ILFV…WAVI), 115-135 (VGVL…IIAG), 161-181 (MGLV…SQIV), 187-207 (MPWW…ISVL), 235-255 (MGFA…SAMT), 275-295 (IPGF…FLWI), and 311-331 (GWKV…SVLI).

The protein belongs to the complex I subunit 1 family. NDH-1 is composed of 14 different subunits. Subunits NuoA, H, J, K, L, M, N constitute the membrane sector of the complex.

The protein resides in the cell inner membrane. The enzyme catalyses a quinone + NADH + 5 H(+)(in) = a quinol + NAD(+) + 4 H(+)(out). In terms of biological role, NDH-1 shuttles electrons from NADH, via FMN and iron-sulfur (Fe-S) centers, to quinones in the respiratory chain. The immediate electron acceptor for the enzyme in this species is believed to be ubiquinone. Couples the redox reaction to proton translocation (for every two electrons transferred, four hydrogen ions are translocated across the cytoplasmic membrane), and thus conserves the redox energy in a proton gradient. This subunit may bind ubiquinone. The sequence is that of NADH-quinone oxidoreductase subunit H from Rickettsia bellii (strain RML369-C).